A 971-amino-acid chain; its full sequence is Exportin-2 (971 aa).

One can recognise an Importin N-terminal domain in the interval 29–102 (AEKFLESVEG…KANIVNLMLT (74 aa)).

It belongs to the XPO2/CSE1 family. Interacts with cftr. In terms of tissue distribution, detected in larval gut, liver, exocrine pancreas and part of the brain and retina at 96 hpf.

It is found in the cytoplasm. It localises to the nucleus. The protein localises to the apical cell membrane. Its subcellular location is the basal cell membrane. The protein resides in the lateral cell membrane. Export receptor for importin alpha. Mediates importin-alpha re-export from the nucleus to the cytoplasm after import substrates have been released into the nucleoplasm. Negatively regulates fluid secretion and plays a role in fluid homeostasis by down-regulating cftr activity. This Danio rerio (Zebrafish) protein is Exportin-2 (cse1l).